We begin with the raw amino-acid sequence, 476 residues long: Bifunctional protein HldE (476 aa).

A ribokinase region spans residues 1-318; it reads MLSKKPNILV…EYESSLHKSN (318 aa). An ATP-binding site is contributed by 195-198; sequence NKKE. Residue aspartate 263 is part of the active site. Positions 345–476 are cytidylyltransferase; the sequence is FTNGCFDILH…RIQENEKCNN (132 aa).

The protein in the N-terminal section; belongs to the carbohydrate kinase PfkB family. In the C-terminal section; belongs to the cytidylyltransferase family. Homodimer.

The catalysed reaction is D-glycero-beta-D-manno-heptose 7-phosphate + ATP = D-glycero-beta-D-manno-heptose 1,7-bisphosphate + ADP + H(+). The enzyme catalyses D-glycero-beta-D-manno-heptose 1-phosphate + ATP + H(+) = ADP-D-glycero-beta-D-manno-heptose + diphosphate. Its pathway is nucleotide-sugar biosynthesis; ADP-L-glycero-beta-D-manno-heptose biosynthesis; ADP-L-glycero-beta-D-manno-heptose from D-glycero-beta-D-manno-heptose 7-phosphate: step 1/4. It participates in nucleotide-sugar biosynthesis; ADP-L-glycero-beta-D-manno-heptose biosynthesis; ADP-L-glycero-beta-D-manno-heptose from D-glycero-beta-D-manno-heptose 7-phosphate: step 3/4. In terms of biological role, catalyzes the phosphorylation of D-glycero-D-manno-heptose 7-phosphate at the C-1 position to selectively form D-glycero-beta-D-manno-heptose-1,7-bisphosphate. Functionally, catalyzes the ADP transfer from ATP to D-glycero-beta-D-manno-heptose 1-phosphate, yielding ADP-D-glycero-beta-D-manno-heptose. The sequence is that of Bifunctional protein HldE from Aliarcobacter butzleri (strain RM4018) (Arcobacter butzleri).